Consider the following 499-residue polypeptide: Dual specificity protein kinase CLK2 (499 aa).

The tract at residues 1–65 is disordered; sequence MPHPRRYHSS…RSSYDDHSSD (65 aa). Positions 8-23 are enriched in basic and acidic residues; it reads HSSERGSRGSYHEHYQ. Over residues 24–33 the composition is skewed to basic residues; that stretch reads SRKHKRRRSR. The residue at position 34 (Ser34) is a Phosphoserine; by PKB/AKT1. Residues 47-65 are compositionally biased toward basic and acidic residues; it reads REDSYHVRSRSSYDDHSSD. A Phosphoserine; by autocatalysis modification is found at Ser98. Position 99 is a phosphotyrosine; by autocatalysis (Tyr99). The disordered stretch occupies residues 102-142; it reads HRENSSYRSQRSSRRKHRRRRRRSRTFSRSSSHSSRRAKSV. A compositionally biased stretch (basic residues) spans 112–127; it reads RSSRRKHRRRRRRSRT. A Phosphothreonine; by PKB/AKT1 modification is found at Thr127. Ser141 bears the Phosphoserine; by autocatalysis mark. Tyr152 is modified (phosphotyrosine). The Protein kinase domain occupies 163–479; the sequence is EIVSTLGEGT…GEALQHPFFA (317 aa). ATP is bound by residues 168–176 and Lys192; that span reads LGEGTFGRV. Catalysis depends on Asp289, which acts as the Proton acceptor. Position 343 is a phosphothreonine; by PKB/AKT2 (Thr343).

It belongs to the protein kinase superfamily. CMGC Ser/Thr protein kinase family. Lammer subfamily. In terms of assembly, interacts with RBMX and UBL5. Interacts with AKT1. Autophosphorylates on all three types of residues. Phosphorylation on Ser-34 and Thr-127 by AKT1 is induced by ionizing radiation or insulin. Phosphorylation plays a critical role in cell proliferation following low dose radiation and prevents cell death following high dose radiation. Phosphorylation at Thr-343 by PKB/AKT2 induces its kinase activity which is required for its stability. The phosphorylation status at Ser-141 influences its subnuclear localization; inhibition of phosphorylation at Ser-141 results in accumulation in the nuclear speckle.

It is found in the nucleus. The protein resides in the nucleus speckle. The enzyme catalyses L-seryl-[protein] + ATP = O-phospho-L-seryl-[protein] + ADP + H(+). It catalyses the reaction L-threonyl-[protein] + ATP = O-phospho-L-threonyl-[protein] + ADP + H(+). The catalysed reaction is L-tyrosyl-[protein] + ATP = O-phospho-L-tyrosyl-[protein] + ADP + H(+). Its activity is regulated as follows. 5,6-dichloro-1-b-D-ribofuranosylbenzimidazole (DRB) inhibits autophosphorylation. TG003 inhibits its kinase activity and affects the regulation of alternative splicing mediated by phosphorylation of SR proteins. Its function is as follows. Dual specificity kinase acting on both serine/threonine and tyrosine-containing substrates. Phosphorylates serine- and arginine-rich (SR) proteins of the spliceosomal complex. May be a constituent of a network of regulatory mechanisms that enable SR proteins to control RNA splicing and can cause redistribution of SR proteins from speckles to a diffuse nucleoplasmic distribution. Acts as a suppressor of hepatic gluconeogenesis and glucose output by repressing PPARGC1A transcriptional activity on gluconeogenic genes via its phosphorylation. Phosphorylates PPP2R5B thereby stimulating the assembly of PP2A phosphatase with the PPP2R5B-AKT1 complex leading to dephosphorylation of AKT1. Phosphorylates: PTPN1, SRSF1 and SRSF3. Regulates the alternative splicing of tissue factor (F3) pre-mRNA in endothelial cells. Phosphorylates PAGE4 at several serine and threonine residues and this phosphorylation attenuates the ability of PAGE4 to potentiate the transcriptional activator activity of JUN. This Mus musculus (Mouse) protein is Dual specificity protein kinase CLK2 (Clk2).